Consider the following 342-residue polypeptide: Protein BASIC PENTACYSTEINE6 (342 aa).

A coiled-coil region spans residues 41-67 (AIQERNLAISEKKAAVAERDMAFLQRD). The tract at residues 41–76 (AIQERNLAISEKKAAVAERDMAFLQRDTAIAERNNA) is alanine-zipper. Residues 143–199 (REMEPNDGLPTSPPAGSTLESAKPKRGKRVNPKATTQTAANKRGPKNQRKVKKESED) form a disordered region. Residues 164–195 (AKPKRGKRVNPKATTQTAANKRGPKNQRKVKK) form a required for nucleus and nucleolus localization region. Positions 185 to 194 (RGPKNQRKVK) are enriched in basic residues. Positions 192–195 (KVKK) match the Nuclear localization signal motif.

It belongs to the BBR/BPC family. Homodimer. Heterodimer with BPC4. Expressed in seedlings, leaves and pistils. Detected in the base of flowers and tips of carpels, in sepal vasculature, in young rosette, in the lateral and tip of primary roots, and in ovule at the exception of the outer integument.

The protein localises to the nucleus. It localises to the nucleolus. Transcriptional regulator that specifically binds to GA-rich elements (GAGA-repeats) present in regulatory sequences of genes involved in developmental processes. This chain is Protein BASIC PENTACYSTEINE6 (BPC6), found in Arabidopsis thaliana (Mouse-ear cress).